Here is a 362-residue protein sequence, read N- to C-terminus: Putative gustatory receptor 89a (362 aa).

Residues 1–38 (MLRFPHVCGLCLLLKYWQILALAPFRTSEPMVARCQRW) are Cytoplasmic-facing. Residues 39–59 (MTLIAVFRWLLLTSMAPFVLW) form a helical membrane-spanning segment. The Extracellular segment spans residues 60-74 (KSAAMYEATNVRHSM). Residues 75–95 (VFKTIALATMTGDVCISLALL) traverse the membrane as a helical segment. Topologically, residues 96–126 (GNHLWNRRELANLVNDLARLHRRRRLSWWST) are cytoplasmic. A helical transmembrane segment spans residues 127 to 147 (LFLWLKLLLSLYDLLCSVPFL). At 148–166 (KGAGGRLPWSQLVAYGVQL) the chain is on the extracellular side. A helical transmembrane segment spans residues 167–187 (YFQHVASVYGNGIFGGILLML). Residues 188–223 (ECYNQLEREEPTNLARLLQKEYSWLRLIQRFVKLFQ) are Cytoplasmic-facing. A helical transmembrane segment spans residues 224–244 (LGIFLLVLGSFVNIMVNIYAF). Over 245–255 (MSYYVSLHGVP) the chain is Extracellular. Residues 256–276 (LTISNNCLVLAIQLYAVILAA) traverse the membrane as a helical segment. At 277–333 (HLCQVRSAKLRKKCLQLEYVPEGLTQEQAMASTPFPVLTPTGNVKFRILGVFILDNS) the chain is on the cytoplasmic side. A helical transmembrane segment spans residues 334 to 354 (FWLFLVSYAMNFIVVILQTSF). Over 355–362 (EHINHGEI) the chain is Extracellular.

It belongs to the insect chemoreceptor superfamily. Gustatory receptor (GR) family. Gr77a subfamily.

Its subcellular location is the cell membrane. Its function is as follows. Probable gustatory receptor which mediates acceptance or avoidance behavior, depending on its substrates. This chain is Putative gustatory receptor 89a (Gr89a), found in Drosophila melanogaster (Fruit fly).